The following is a 106-amino-acid chain: Replication restart protein PriB (106 aa).

Residues 4-103 form the SSB domain; that stretch reads MNRLVLSGTV…LHAEQIELID (100 aa).

This sequence belongs to the PriB family. Homodimer. Interacts with PriA and DnaT. Component of the replication restart primosome. Primosome assembly occurs via a 'hand-off' mechanism. PriA binds to replication forks, subsequently PriB then DnaT bind; DnaT then displaces ssDNA to generate the helicase loading substrate.

In terms of biological role, involved in the restart of stalled replication forks, which reloads the replicative helicase on sites other than the origin of replication; the PriA-PriB pathway is the major replication restart pathway. During primosome assembly it facilitates complex formation between PriA and DnaT on DNA; stabilizes PriA on DNA. Stimulates the DNA unwinding activity of PriA helicase. The chain is Replication restart protein PriB from Pectobacterium atrosepticum (strain SCRI 1043 / ATCC BAA-672) (Erwinia carotovora subsp. atroseptica).